The chain runs to 36 residues: Cecropin-D (36 aa).

The residue at position 36 (Lys-36) is a Lysine amide.

The protein belongs to the cecropin family.

It localises to the secreted. Its function is as follows. Cecropins have lytic and antibacterial activity against several Gram-positive and Gram-negative bacteria. This is Cecropin-D from Antheraea pernyi (Chinese oak silk moth).